Here is a 561-residue protein sequence, read N- to C-terminus: Oxygen-dependent choline dehydrogenase (561 aa).

7 to 36 contacts FAD; the sequence is DYIIVGAGSAGNVLASRLAEDADVTVLLLE. H474 functions as the Proton acceptor in the catalytic mechanism.

The protein belongs to the GMC oxidoreductase family. FAD serves as cofactor.

The catalysed reaction is choline + A = betaine aldehyde + AH2. The enzyme catalyses betaine aldehyde + NAD(+) + H2O = glycine betaine + NADH + 2 H(+). Its pathway is amine and polyamine biosynthesis; betaine biosynthesis via choline pathway; betaine aldehyde from choline (cytochrome c reductase route): step 1/1. Its function is as follows. Involved in the biosynthesis of the osmoprotectant glycine betaine. Catalyzes the oxidation of choline to betaine aldehyde and betaine aldehyde to glycine betaine at the same rate. The protein is Oxygen-dependent choline dehydrogenase of Paraburkholderia xenovorans (strain LB400).